Consider the following 228-residue polypeptide: Response regulator SaeR (228 aa).

Positions 3 to 116 (HLLIVDDEQD…ELVLRINNLL (114 aa)) constitute a Response regulatory domain. Aspartate 51 carries the post-translational modification 4-aspartylphosphate. Residues 127–226 (VEQLSFDELT…VWGLGYKFER (100 aa)) constitute a DNA-binding region (ompR/PhoB-type).

Phosphorylated by SaeS.

The protein resides in the cytoplasm. Member of the two-component regulatory system SaeR/SaeS involved in the regulation of staphylococcal virulence factors in a strain-dependent fashion. Probably functions as a transcriptional regulator via a specific DNA-binding domain, recognizing motifs near the promoter sequences of target genes. This Staphylococcus aureus (strain USA300) protein is Response regulator SaeR (saeR).